The primary structure comprises 437 residues: Sodium/bile acid cotransporter 4 (437 aa).

The Extracellular portion of the chain corresponds to 1–103 (MDGLDNTTRL…PPFWDTPLNH (103 aa)). Residues N6, N20, and N26 are each glycosylated (N-linked (GlcNAc...) asparagine). Residues 16 to 84 (LLPDNLTLSP…GGVAGQDSST (69 aa)) form a disordered region. A compositionally biased stretch (low complexity) spans 21–50 (LTLSPNASSTSASTLSPLPVTSSPSPGLSL). Residues 104-124 (GLNVFVGAALCITMLGLGCTV) traverse the membrane as a helical segment. The Cytoplasmic segment spans residues 125–140 (DVNHFGAHVRRPVGAL). Residues 141–161 (LAALCQFGFLPLLAFLLALAF) form a helical membrane-spanning segment. Topologically, residues 162–197 (KLDEVAAVAVLLCGCCPGGNLSNLMSLLVDGDMNLS) are extracellular. N-linked (GlcNAc...) asparagine glycosylation is found at N181 and N195. A helical transmembrane segment spans residues 198–218 (IIMTISSTLLALVLMPLCLWI). Residues 219-233 (YSRAWINTPLVQLLP) are Cytoplasmic-facing. Residues 234-254 (LGAVTLTLCSTLIPIGLGVFI) form a helical membrane-spanning segment. Topologically, residues 255-267 (RYKYNRVADYIVK) are extracellular. Residues 268 to 288 (VSLCSLLVTLVVLFIMTGTML) traverse the membrane as a helical segment. Residues 289–291 (GPE) are Cytoplasmic-facing. A helical transmembrane segment spans residues 292–312 (LLASIPAAVYVVAIFMPLAGY). The Extracellular segment spans residues 313 to 360 (ASGYGLATLFHLPPNCKRTVCLETGSQNVQLCTAILKLAFPPRFIGSM). Residues 361–381 (YMFPLLYALFQSAEAGVFVLI) form a helical membrane-spanning segment. Residues 382-437 (YKMYGSEILHKREALDEDDDTDISYKKLKEEELADTSYGTVGTDDLVLMETTQTSL) lie on the Cytoplasmic side of the membrane.

Belongs to the bile acid:sodium symporter (BASS) (TC 2.A.28) family. In terms of processing, activated following N-terminal proteolytic cleavage by thrombin and/or proteases. As to expression, mainly expressed in the central nervous system cholinergic neurons. Expressed (at protein level) in motor regions of the spinal cord and rhombencephalon, in mesopontine cholinergic neurons, the medial habenula, cholinergic areas of the forebrain, and the gut myenteric plexus.

It is found in the cell membrane. In terms of biological role, transporter for bile acids. The sequence is that of Sodium/bile acid cotransporter 4 (Slc10a4) from Rattus norvegicus (Rat).